The sequence spans 431 residues: Synaptotagmin-11 (431 aa).

The Vesicular segment spans residues 1–15; the sequence is MAEITNIRPSFDVSP. A helical transmembrane segment spans residues 16–36; that stretch reads VVAGLIGASVLVVCVSVTVFV. Topologically, residues 37 to 431 are cytoplasmic; sequence WSCCHQQAEK…VAKWHSLSEY (395 aa). Ser134 bears the Phosphoserine mark. The segment at 134-154 is disordered; that stretch reads SPITSLTPGESKTTSPSSPEE. A compositionally biased stretch (low complexity) spans 140-151; that stretch reads TPGESKTTSPSS. C2 domains are found at residues 157–279 and 291–426; these read MLGS…QLTR and SRGE…AKWH. Ca(2+)-binding residues include Asp250, Ser253, and Asp256.

The protein belongs to the synaptotagmin family. In terms of assembly, homodimer. Can also form heterodimers. Interacts with PRKN. Interacts (via C2 2 domain) with AGO2 and SND1; the interaction with SND1 is direct. Interacts with KIF1A; the interaction increases in presence of calcium. Requires Ca(2+) as cofactor. Ubiquitinated, at least by PRKN, and targeted to the proteasome complex for degradation. Ubiquitination is inhibited by ATP13A2.

It is found in the cytoplasmic vesicle membrane. Its subcellular location is the perikaryon. The protein resides in the golgi apparatus. The protein localises to the trans-Golgi network membrane. It localises to the recycling endosome membrane. It is found in the lysosome membrane. Its subcellular location is the cytoplasmic vesicle. The protein resides in the phagosome. The protein localises to the cell projection. It localises to the axon. It is found in the dendrite. Its subcellular location is the postsynaptic density. The protein resides in the clathrin-coated vesicle membrane. Functionally, synaptotagmin family member involved in vesicular and membrane trafficking which does not bind Ca(2+). Inhibits clathrin-mediated and bulk endocytosis, functions to ensure precision in vesicle retrieval. Plays an important role in dopamine transmission by regulating endocytosis and the vesicle-recycling process. Essential component of a neuronal vesicular trafficking pathway that differs from the synaptic vesicle trafficking pathway but is crucial for development and synaptic plasticity. In macrophages and microglia, inhibits the conventional cytokine secretion, of at least IL6 and TNF, and phagocytosis. In astrocytes, regulates lysosome exocytosis, mechanism required for the repair of injured astrocyte cell membrane. Required for the ATP13A2-mediated regulation of the autophagy-lysosome pathway. This is Synaptotagmin-11 from Homo sapiens (Human).